Consider the following 341-residue polypeptide: Fructose-1,6-bisphosphatase class 1 1 (341 aa).

4 residues coordinate Mg(2+): Glu92, Asp114, Leu116, and Asp117. Substrate is bound by residues 117-120 (DGSS), Asn209, and Lys275. Residue Glu281 participates in Mg(2+) binding.

It belongs to the FBPase class 1 family. As to quaternary structure, homotetramer. Requires Mg(2+) as cofactor.

It is found in the cytoplasm. The enzyme catalyses beta-D-fructose 1,6-bisphosphate + H2O = beta-D-fructose 6-phosphate + phosphate. It functions in the pathway carbohydrate biosynthesis; gluconeogenesis. The sequence is that of Fructose-1,6-bisphosphatase class 1 1 from Leptothrix cholodnii (strain ATCC 51168 / LMG 8142 / SP-6) (Leptothrix discophora (strain SP-6)).